The following is a 430-amino-acid chain: Tyrosine--tRNA ligase (430 aa).

Tyr-32 is a binding site for L-tyrosine. The 'HIGH' region signature appears at 37-46 (PTADSLHIGH). Residues Tyr-172 and Gln-176 each contribute to the L-tyrosine site. A 'KMSKS' region motif is present at residues 232 to 236 (KFGKT). Residue Lys-235 coordinates ATP. Residues 362 to 429 (IKAVDLCTEK…GKKNYYLLIA (68 aa)) form the S4 RNA-binding domain.

It belongs to the class-I aminoacyl-tRNA synthetase family. TyrS type 1 subfamily. As to quaternary structure, homodimer.

Its subcellular location is the cytoplasm. The catalysed reaction is tRNA(Tyr) + L-tyrosine + ATP = L-tyrosyl-tRNA(Tyr) + AMP + diphosphate + H(+). Catalyzes the attachment of tyrosine to tRNA(Tyr) in a two-step reaction: tyrosine is first activated by ATP to form Tyr-AMP and then transferred to the acceptor end of tRNA(Tyr). This Parabacteroides distasonis (strain ATCC 8503 / DSM 20701 / CIP 104284 / JCM 5825 / NCTC 11152) protein is Tyrosine--tRNA ligase.